The following is a 381-amino-acid chain: Subtilisin NAT (381 aa).

The N-terminal stretch at 1-29 (MRSKKLWISLLFALTLIFTMAFSNMSAQA) is a signal peptide. The propeptide occupies 30 to 106 (AGKSSTEKKY…VEEDHIAHEY (77 aa)). An Inhibitor I9 domain is found at 38–103 (KYIVGFKQTM…VAYVEEDHIA (66 aa)). The region spanning 111-380 (PYGISQIKAP…KGLINVQAAA (270 aa)) is the Peptidase S8 domain. Aspartate 138 functions as the Charge relay system in the catalytic mechanism. Aspartate 147 provides a ligand contact to Ca(2+). Histidine 170 serves as the catalytic Charge relay system. 8 residues coordinate Ca(2+): leucine 181, asparagine 183, isoleucine 185, valine 187, alanine 275, tyrosine 277, threonine 280, and aspartate 303. Serine 327 (charge relay system) is an active-site residue.

The protein belongs to the peptidase S8 family. In terms of assembly, monomer. The cofactor is Ca(2+).

The protein localises to the secreted. It carries out the reaction Hydrolysis of proteins with broad specificity for peptide bonds, and a preference for a large uncharged residue in P1. Hydrolyzes peptide amides.. Inhibited by PMSF (phenylmethylsulfonyl fluoride). In terms of biological role, subtilisin is an extracellular alkaline serine protease, it catalyzes the hydrolysis of proteins and peptide amides. Subtilisin NAT also has fibrinolytic activity. In Bacillus subtilis subsp. natto, this protein is Subtilisin NAT.